Consider the following 200-residue polypeptide: Cysteine dioxygenase type 1 (200 aa).

The Fe cation site is built by His86, His88, and His140. The segment at residues 93 to 157 is a cross-link (3'-(S-cysteinyl)-tyrosine (Cys-Tyr)); that stretch reads CFLKMLQGNL…TEPAVSLHLY (65 aa).

Belongs to the cysteine dioxygenase family. As to quaternary structure, monomer. Requires Fe cation as cofactor. Ni(2+) is required as a cofactor. Zn(2+) serves as cofactor. The thioether cross-link between Cys-93 and Tyr-157 plays a structural role through stabilizing the Fe(2+) ion, and prevents the production of highly damaging free hydroxyl radicals by holding the oxygen radical via hydroxyl hydrogen.

The catalysed reaction is L-cysteine + O2 = 3-sulfino-L-alanine + H(+). Its pathway is organosulfur biosynthesis; taurine biosynthesis; hypotaurine from L-cysteine: step 1/2. Catalyzes the oxidation of cysteine to cysteine sulfinic acid with addition of molecular dioxygen. This chain is Cysteine dioxygenase type 1 (CDO1), found in Bos taurus (Bovine).